The following is a 980-amino-acid chain: Peroxisomal ATPase PEX6 (980 aa).

Position 119 is an omega-N-methylarginine (Arg119). ATP contacts are provided by residues 470–477 (GPPGCGKT) and 744–751 (GPPGTGKT).

This sequence belongs to the AAA ATPase family. Interacts with PEX1; forming the PEX1-PEX6 AAA ATPase complex, which is composed of a heterohexamer formed by a trimer of PEX1-PEX6 dimers. Interacts with PEX26; interaction is direct and promotes recruitment to peroxisomal membranes. Interacts with ZFAND6. As to expression, expressed in the retina, at higher levels in the photoreceptor layer at the joint between the outer and inner segments.

The protein resides in the cytoplasm. The protein localises to the cytosol. It is found in the peroxisome membrane. Its subcellular location is the cell projection. It localises to the cilium. The protein resides in the photoreceptor outer segment. It carries out the reaction ATP + H2O = ADP + phosphate + H(+). In terms of biological role, component of the PEX1-PEX6 AAA ATPase complex, a protein dislocase complex that mediates the ATP-dependent extraction of the PEX5 receptor from peroxisomal membranes, an essential step for PEX5 recycling. Specifically recognizes PEX5 monoubiquitinated at 'Cys-11', and pulls it out of the peroxisome lumen through the PEX2-PEX10-PEX12 retrotranslocation channel. Extraction by the PEX1-PEX6 AAA ATPase complex is accompanied by unfolding of the TPR repeats and release of bound cargo from PEX5. The polypeptide is Peroxisomal ATPase PEX6 (Homo sapiens (Human)).